We begin with the raw amino-acid sequence, 166 residues long: MGLNLDDKKAVVAEVSAQVANAQTIAVAEYRGIAVGDLTGLRAKARESGVYLRVLKNTLVRRAIAETPFAGLSDQLVGPLIYGISEDPVAAAKVLNDFAKGNDKLVLKAGSYAGNTLDKAGVQALASIPSREELLARLLGVMQAPVTGFACTLAALAKKREEEVAA.

Belongs to the universal ribosomal protein uL10 family. As to quaternary structure, part of the ribosomal stalk of the 50S ribosomal subunit. The N-terminus interacts with L11 and the large rRNA to form the base of the stalk. The C-terminus forms an elongated spine to which L12 dimers bind in a sequential fashion forming a multimeric L10(L12)X complex.

Functionally, forms part of the ribosomal stalk, playing a central role in the interaction of the ribosome with GTP-bound translation factors. The protein is Large ribosomal subunit protein uL10 of Aromatoleum aromaticum (strain DSM 19018 / LMG 30748 / EbN1) (Azoarcus sp. (strain EbN1)).